The sequence spans 1240 residues: Cohesin subunit SA-3 (1240 aa).

A compositionally biased stretch (low complexity) spans methionine 1–lysine 25. A disordered region spans residues methionine 1–serine 108. Residues arginine 97 to serine 108 show a composition bias toward polar residues. Residues phenylalanine 324–methionine 409 form the SCD domain. Disordered regions lie at residues alanine 1077–isoleucine 1154 and aspartate 1213–phenylalanine 1240. The segment covering glycine 1115 to alanine 1125 has biased composition (polar residues). A compositionally biased stretch (basic residues) spans valine 1126–glycine 1141. Residue serine 1218 is modified to Phosphoserine.

It belongs to the SCC3 family. In terms of assembly, component of the meiosis-specific cohesin complex, which also contains the SMC1 (SMC1A or SMC1B) and SMC3 heterodimer. Such complex likely contains RAD21, or the meiosis-specific related protein REC8. Interacts with CCDC79/TERB1; recruiting cohesin to telomeres to develop structural rigidity. Post-translationally, phosphorylated. Testis specific.

It localises to the nucleus. It is found in the chromosome. Its subcellular location is the centromere. Functionally, meiosis specific component of cohesin complex. The cohesin complex is required for the cohesion of sister chromatids after DNA replication. The cohesin complex apparently forms a large proteinaceous ring within which sister chromatids can be trapped. At anaphase, the complex is cleaved and dissociates from chromatin, allowing sister chromatids to segregate. The meiosis-specific cohesin complex probably replaces mitosis specific cohesin complex when it dissociates from chromatin during prophase I. This is Cohesin subunit SA-3 (Stag3) from Mus musculus (Mouse).